A 555-amino-acid polypeptide reads, in one-letter code: CCR4-NOT transcription complex subunit 6-like (555 aa).

The required for interaction with CNOT1, CNOT3 and CNOT7 stretch occupies residues 1 to 152 (MRLIGMPKEK…NLYQDPDGTR (152 aa)). LRR repeat units lie at residues 57-78 (HLTA…IAKL), 80-101 (NLVY…LGNM), 103-125 (SLRE…GRLF), and 126-148 (QLQT…YQDP). Residues 158 to 555 (MLDNLAVHPE…VNGVHLPNRR (398 aa)) are nuclease domain. Glu240 is a Mg(2+) binding site. Substrate-binding residues include Glu240, Glu276, His360, and Pro365. Asp410 serves as a coordination point for Mg(2+). Asp410 functions as the Proton donor/acceptor in the catalytic mechanism. The substrate site is built by Asn412, Asn479, and Phe484.

The protein belongs to the CCR4/nocturin family. Component of the CCR4-NOT complex; distinct complexes seem to exist that differ in the participation of probably mutually exclusive catalytic subunits; the complex contains two deadenylase subunits, CNOT6 or CNOT6L, and CNOT7 or CNOT8. Interacts with CNOT1, CNOT3, CNOT7, CNOT8 and CNOT9. Interacts with TOB1. Interacts with NANOS2. Interacts with ZFP36. Interacts with ZFP36L2. Interacts with RBM46. The cofactor is Mg(2+). Highly expressed in placenta, skeletal muscle, pancreas, testis and leukocytes. Weakly expressed in heart, spleen and thymus.

It is found in the cytoplasm. The protein localises to the nucleus. The catalysed reaction is Exonucleolytic cleavage of poly(A) to 5'-AMP.. Its activity is regulated as follows. Inhibited by free AMP, and with lesser efficiency also by CMP, GMP, UMP, ATP and neomycin. Has 3'-5' poly(A) exoribonuclease activity for synthetic poly(A) RNA substrate. Catalytic component of the CCR4-NOT complex which is one of the major cellular mRNA deadenylases and is linked to various cellular processes including bulk mRNA degradation, miRNA-mediated repression, translational repression during translational initiation and general transcription regulation. Additional complex functions may be a consequence of its influence on mRNA expression. May be involved in the deadenylation-dependent degradation of mRNAs through the 3'-UTR AU-rich element-mediated mechanism. Involved in deadenylation-dependent degradation of CDKN1B mRNA. Its mRNA deadenylase activity can be inhibited by TOB1. Mediates cell proliferation and cell survival and prevents cellular senescence. This Homo sapiens (Human) protein is CCR4-NOT transcription complex subunit 6-like (CNOT6L).